Consider the following 169-residue polypeptide: Peptide methionine sulfoxide reductase MsrA (169 aa).

Residue cysteine 10 is part of the active site.

This sequence belongs to the MsrA Met sulfoxide reductase family.

It catalyses the reaction L-methionyl-[protein] + [thioredoxin]-disulfide + H2O = L-methionyl-(S)-S-oxide-[protein] + [thioredoxin]-dithiol. The catalysed reaction is [thioredoxin]-disulfide + L-methionine + H2O = L-methionine (S)-S-oxide + [thioredoxin]-dithiol. In terms of biological role, has an important function as a repair enzyme for proteins that have been inactivated by oxidation. Catalyzes the reversible oxidation-reduction of methionine sulfoxide in proteins to methionine. The sequence is that of Peptide methionine sulfoxide reductase MsrA from Streptococcus pyogenes serotype M3 (strain ATCC BAA-595 / MGAS315).